A 276-amino-acid chain; its full sequence is Large ribosomal subunit protein uL2c (276 aa).

The interval Asn-225–Ala-256 is disordered.

It belongs to the universal ribosomal protein uL2 family. As to quaternary structure, part of the 50S ribosomal subunit.

The protein localises to the plastid. Its subcellular location is the chloroplast. This Mesostigma viride (Green alga) protein is Large ribosomal subunit protein uL2c (rpl2).